Reading from the N-terminus, the 357-residue chain is Iron deficiency-induced protein A (357 aa).

The tat-type signal signal peptide spans 1 to 36; sequence MSESMFSRRDFLLGGTALAGTLLLDSFGDWRRRAEA. 5 residues coordinate Fe cation: histidine 48, tyrosine 49, tyrosine 182, tyrosine 238, and tyrosine 239.

The protein belongs to the bacterial solute-binding protein 1 family. Post-translationally, predicted to be exported by the Tat system. The position of the signal peptide cleavage has not been experimentally proven.

Its subcellular location is the cellular thylakoid membrane. Its function is as follows. Plays an important role in protecting the acceptor side of photosystem II (PSII) against oxidative damage, especially under iron-limiting growth conditions. In terms of biological role, may also be part of a periplasmic ABC transporter complex involved in iron import. The protein is Iron deficiency-induced protein A (idiA) of Synechococcus elongatus (strain ATCC 33912 / PCC 7942 / FACHB-805) (Anacystis nidulans R2).